The primary structure comprises 288 residues: Putative alkaline ceramidase dcd3A (288 aa).

The N-linked (GlcNAc...) asparagine glycan is linked to asparagine 23. The next 7 membrane-spanning stretches (helical) occupy residues 41–61 (IISLFGIYGIWIMMPNFGTGV), 78–98 (VILSYISLIVVGVGSAFYHAT), 105–125 (LFDELPMIYTALIMLYIMVTV), 146–166 (HLLPYLLIAYGLFVTITILVI), 172–192 (ILQVSFGALVFYVVFHSIYLI), 206–226 (SYLYKYAFVSMLVGFTCWVVE), and 240–260 (LHAFWHFFTGMSTYVWTQFLI).

This sequence belongs to the alkaline ceramidase family.

The protein localises to the membrane. This chain is Putative alkaline ceramidase dcd3A (dcd3A), found in Dictyostelium discoideum (Social amoeba).